We begin with the raw amino-acid sequence, 192 residues long: Peptidyl-tRNA hydrolase (192 aa).

TRNA is bound at residue Tyr-14. His-19 serves as the catalytic Proton acceptor. The tRNA site is built by Tyr-61, Asn-63, and Asn-107.

This sequence belongs to the PTH family. Monomer.

It is found in the cytoplasm. The enzyme catalyses an N-acyl-L-alpha-aminoacyl-tRNA + H2O = an N-acyl-L-amino acid + a tRNA + H(+). Hydrolyzes ribosome-free peptidyl-tRNAs (with 1 or more amino acids incorporated), which drop off the ribosome during protein synthesis, or as a result of ribosome stalling. Functionally, catalyzes the release of premature peptidyl moieties from peptidyl-tRNA molecules trapped in stalled 50S ribosomal subunits, and thus maintains levels of free tRNAs and 50S ribosomes. This chain is Peptidyl-tRNA hydrolase, found in Wolinella succinogenes (strain ATCC 29543 / DSM 1740 / CCUG 13145 / JCM 31913 / LMG 7466 / NCTC 11488 / FDC 602W) (Vibrio succinogenes).